A 252-amino-acid chain; its full sequence is tRNA pseudouridine synthase A (252 aa).

D52 acts as the Nucleophile in catalysis. Residue Y111 participates in substrate binding.

The protein belongs to the tRNA pseudouridine synthase TruA family. As to quaternary structure, homodimer.

The catalysed reaction is uridine(38/39/40) in tRNA = pseudouridine(38/39/40) in tRNA. Functionally, formation of pseudouridine at positions 38, 39 and 40 in the anticodon stem and loop of transfer RNAs. The chain is tRNA pseudouridine synthase A from Methylorubrum populi (strain ATCC BAA-705 / NCIMB 13946 / BJ001) (Methylobacterium populi).